Reading from the N-terminus, the 257-residue chain is MTTMTSTASKLEVRDLNFFYGNFHALKGIQLEIAPRKVTAFIGPSGCGKSTLLRTFNRMYELYPGLRAEGEIMLDGQNILGRDIDVNLLRAKVGMVFQKPTPFPMSIYDNITFGVKLYEKLSKGEMEDRVEWALRKAALWDEVKDKLKQSGNSLSGGQQQRLCIARAVASKPEVLLLDEPTSALDPISTAHIEELIHELKEDYTIAIVTHNMQQAARVSDYTAYMYLGELVEFGNTDTIFTTPQKKATEDYITGKFG.

An ABC transporter domain is found at 11–252 (LEVRDLNFFY…PQKKATEDYI (242 aa)). 43–50 (GPSGCGKS) lines the ATP pocket.

It belongs to the ABC transporter superfamily. Phosphate importer (TC 3.A.1.7) family. The complex is composed of two ATP-binding proteins (PstB), two transmembrane proteins (PstC and PstA) and a solute-binding protein (PstS).

The protein resides in the cell inner membrane. It catalyses the reaction phosphate(out) + ATP + H2O = ADP + 2 phosphate(in) + H(+). In terms of biological role, part of the ABC transporter complex PstSACB involved in phosphate import. Responsible for energy coupling to the transport system. The sequence is that of Phosphate import ATP-binding protein PstB from Chromobacterium violaceum (strain ATCC 12472 / DSM 30191 / JCM 1249 / CCUG 213 / NBRC 12614 / NCIMB 9131 / NCTC 9757 / MK).